The following is a 361-amino-acid chain: MSQNSLRLVEDKSVDKSKALEAALSQIERSFGKGSIMKLGSNENVVEIETVSTGSLSLDIALGIGGLPKGRIVEIYGPESSGKTTLALQTIAEAQKKGGICAFVDAEHALDPVYARKLGVDLQNLLISQPDTGEQALEITDTLVRSGAIDVLVVDSVAALTPRAEIEGEMGDSLPGLQARLMSQALRKLTASISKSNTMVIFINQIRMKIGVMFGSPETTTGGNALKFYASVRLDIRRIGAVKEREEVVGNQTRVKVVKNKMAPPFKQVEFDIMYGEGVSKTGELVDLGVKAGIVEKSGAWFSYNSQRLGQGRENAKLFLRDNPDLAREIELSLRQNAGLIADRFLQNGGPDADDGEAAAE.

Glycine 77–threonine 84 is an ATP binding site.

The protein belongs to the RecA family.

It is found in the cytoplasm. Can catalyze the hydrolysis of ATP in the presence of single-stranded DNA, the ATP-dependent uptake of single-stranded DNA by duplex DNA, and the ATP-dependent hybridization of homologous single-stranded DNAs. It interacts with LexA causing its activation and leading to its autocatalytic cleavage. The protein is Protein RecA of Rhizobium rhizogenes (strain K84 / ATCC BAA-868) (Agrobacterium radiobacter).